A 318-amino-acid polypeptide reads, in one-letter code: Formimidoylglutamase (318 aa).

The Mn(2+) site is built by H130, D155, H157, D159, D246, and D248.

This sequence belongs to the arginase family. Mn(2+) is required as a cofactor.

It carries out the reaction N-formimidoyl-L-glutamate + H2O = formamide + L-glutamate. It functions in the pathway amino-acid degradation; L-histidine degradation into L-glutamate; L-glutamate from N-formimidoyl-L-glutamate (hydrolase route): step 1/1. Functionally, catalyzes the conversion of N-formimidoyl-L-glutamate to L-glutamate and formamide. The protein is Formimidoylglutamase of Klebsiella pneumoniae (strain 342).